Reading from the N-terminus, the 499-residue chain is Putative alpha-galactosidase 8 (499 aa).

Residues Asn154 and Asn191 are each glycosylated (N-linked (GlcNAc...) asparagine). Asp238 serves as the catalytic Nucleophile. Asn256 carries an N-linked (GlcNAc...) asparagine glycan. Asp303 serves as the catalytic Proton donor.

This sequence belongs to the glycosyl hydrolase 27 family.

It localises to the secreted. It catalyses the reaction Hydrolysis of terminal, non-reducing alpha-D-galactose residues in alpha-D-galactosides, including galactose oligosaccharides, galactomannans and galactolipids.. Putative alpha-galactosidase involved in the degradation of simple oligosaccharides like melibiose, raffinose and stachyose, and of polymeric galacto(gluco)mannans. The sequence is that of Putative alpha-galactosidase 8 (agl8) from Emericella nidulans (strain FGSC A4 / ATCC 38163 / CBS 112.46 / NRRL 194 / M139) (Aspergillus nidulans).